A 477-amino-acid polypeptide reads, in one-letter code: V-type proton ATPase subunit B (477 aa).

R365 lines the ATP pocket.

It belongs to the ATPase alpha/beta chains family. In terms of assembly, V-ATPase is a heteromultimeric enzyme composed of a peripheral catalytic V1 complex (components A to H) attached to an integral membrane V0 proton pore complex (components: a, c, c', c'', d, e, f and VOA1).

Its subcellular location is the vacuole membrane. In terms of biological role, non-catalytic subunit of the V1 complex of vacuolar(H+)-ATPase (V-ATPase), a multisubunit enzyme composed of a peripheral complex (V1) that hydrolyzes ATP and a membrane integral complex (V0) that translocates protons. V-ATPase is responsible for acidifying and maintaining the pH of intracellular compartments. The protein is V-type proton ATPase subunit B of Encephalitozoon cuniculi (strain GB-M1) (Microsporidian parasite).